The following is a 256-amino-acid chain: Thiazole synthase (256 aa).

Residue lysine 95 is the Schiff-base intermediate with DXP of the active site. Residues glycine 156, 182-183 (AG), and 204-205 (NT) each bind 1-deoxy-D-xylulose 5-phosphate.

The protein belongs to the ThiG family. As to quaternary structure, homotetramer. Forms heterodimers with either ThiH or ThiS.

It is found in the cytoplasm. The catalysed reaction is [ThiS sulfur-carrier protein]-C-terminal-Gly-aminoethanethioate + 2-iminoacetate + 1-deoxy-D-xylulose 5-phosphate = [ThiS sulfur-carrier protein]-C-terminal Gly-Gly + 2-[(2R,5Z)-2-carboxy-4-methylthiazol-5(2H)-ylidene]ethyl phosphate + 2 H2O + H(+). The protein operates within cofactor biosynthesis; thiamine diphosphate biosynthesis. In terms of biological role, catalyzes the rearrangement of 1-deoxy-D-xylulose 5-phosphate (DXP) to produce the thiazole phosphate moiety of thiamine. Sulfur is provided by the thiocarboxylate moiety of the carrier protein ThiS. In vitro, sulfur can be provided by H(2)S. The chain is Thiazole synthase from Idiomarina loihiensis (strain ATCC BAA-735 / DSM 15497 / L2-TR).